The primary structure comprises 133 residues: ATP synthase epsilon chain, chloroplastic (133 aa).

Belongs to the ATPase epsilon chain family. In terms of assembly, F-type ATPases have 2 components, CF(1) - the catalytic core - and CF(0) - the membrane proton channel. CF(1) has five subunits: alpha(3), beta(3), gamma(1), delta(1), epsilon(1). CF(0) has three main subunits: a, b and c.

Its subcellular location is the plastid. It is found in the chloroplast thylakoid membrane. Its function is as follows. Produces ATP from ADP in the presence of a proton gradient across the membrane. The chain is ATP synthase epsilon chain, chloroplastic from Nephroselmis olivacea (Green alga).